We begin with the raw amino-acid sequence, 332 residues long: Ribose-phosphate pyrophosphokinase (332 aa).

D55–E57 provides a ligand contact to ATP. H148 and D187 together coordinate Mg(2+). The active site involves K211. Residues R213, D237, and D241–T245 contribute to the D-ribose 5-phosphate site.

The protein belongs to the ribose-phosphate pyrophosphokinase family. Class I subfamily. As to quaternary structure, homohexamer. The cofactor is Mg(2+).

It localises to the cytoplasm. It catalyses the reaction D-ribose 5-phosphate + ATP = 5-phospho-alpha-D-ribose 1-diphosphate + AMP + H(+). It participates in metabolic intermediate biosynthesis; 5-phospho-alpha-D-ribose 1-diphosphate biosynthesis; 5-phospho-alpha-D-ribose 1-diphosphate from D-ribose 5-phosphate (route I): step 1/1. Involved in the biosynthesis of the central metabolite phospho-alpha-D-ribosyl-1-pyrophosphate (PRPP) via the transfer of pyrophosphoryl group from ATP to 1-hydroxyl of ribose-5-phosphate (Rib-5-P). This is Ribose-phosphate pyrophosphokinase from Prochlorococcus marinus (strain MIT 9313).